A 190-amino-acid polypeptide reads, in one-letter code: Apolipoprotein M (190 aa).

A signal peptide (not cleaved) is located at residues 1–22; it reads MFHQVWAALLSLYGLLFNSMNQ. Cystine bridges form between Cys23/Cys169, Cys95/Cys185, and Cys130/Cys159. Residues Glu138 and Arg145 each contribute to the tetradecanoate site.

It belongs to the calycin superfamily. Lipocalin family. Highly divergent. In terms of assembly, interacts with LRP2; LRP2 mediates APOM renal uptake and subsequent lysosomal degradation. Expressed by the liver; secreted in plasma.

The protein resides in the secreted. In terms of biological role, probably involved in lipid transport. Can bind sphingosine-1-phosphate, myristic acid, palmitic acid and stearic acid, retinol, all-trans-retinoic acid and 9-cis-retinoic acid. This chain is Apolipoprotein M (Apom), found in Mus musculus (Mouse).